Reading from the N-terminus, the 447-residue chain is Probable 7-dehydrocholesterol reductase (447 aa).

A run of 8 helical transmembrane segments spans residues 24–44 (LTTA…YLIT), 71–91 (IPSF…FQLI), 102–124 (FVPH…LVYY), 133–153 (IITH…PTII), 157–177 (WGSI…LAYF), 244–264 (YVSN…VDFF), 281–301 (FGWM…TLQA), and 309–329 (IDLS…GYII). Residues K337, R341, I367, W372, and 379–380 (NY) contribute to the NADP(+) site. The helical transmembrane segment at 393 to 413 (ACGFSHFIPYFYCVYMTILLV) threads the bilayer. Residues D419, 423–427 (CSRKY), and Y434 each bind NADP(+).

It belongs to the ERG4/ERG24 family.

The protein localises to the membrane. The enzyme catalyses cholesterol + NADP(+) = 7-dehydrocholesterol + NADPH + H(+). It participates in steroid biosynthesis; cholesterol biosynthesis. Catalyzes the last step of the cholesterol synthesis pathway, which transforms cholesta-5,7-dien-3beta-ol (7-dehydrocholesterol,7-DHC) into cholesterol by reducing the C7-C8 double bond of its sterol core. The chain is Probable 7-dehydrocholesterol reductase (DHCR7) from Acanthamoeba polyphaga (Amoeba).